We begin with the raw amino-acid sequence, 227 residues long: Deoxyribose-phosphate aldolase (227 aa).

Catalysis depends on Asp-98, which acts as the Proton donor/acceptor. Lys-161 (schiff-base intermediate with acetaldehyde) is an active-site residue. The active-site Proton donor/acceptor is Lys-191.

The protein belongs to the DeoC/FbaB aldolase family. DeoC type 1 subfamily.

Its subcellular location is the cytoplasm. It carries out the reaction 2-deoxy-D-ribose 5-phosphate = D-glyceraldehyde 3-phosphate + acetaldehyde. The protein operates within carbohydrate degradation; 2-deoxy-D-ribose 1-phosphate degradation; D-glyceraldehyde 3-phosphate and acetaldehyde from 2-deoxy-alpha-D-ribose 1-phosphate: step 2/2. In terms of biological role, catalyzes a reversible aldol reaction between acetaldehyde and D-glyceraldehyde 3-phosphate to generate 2-deoxy-D-ribose 5-phosphate. The sequence is that of Deoxyribose-phosphate aldolase from Frankia alni (strain DSM 45986 / CECT 9034 / ACN14a).